Reading from the N-terminus, the 288-residue chain is Probable aquaporin PIP2-2 (288 aa).

The disordered stretch occupies residues 1-21; it reads MAKDIEASAPEGGEFSAKDYT. Helical transmembrane passes span 42–62 and 81–101; these read AVIAEFIATLLFLYITVATVI and GVGILGIAWAFGGMIFILVYC. Positions 111–113 match the NPA 1 motif; that stretch reads NPA. Transmembrane regions (helical) follow at residues 130 to 150, 172 to 192, and 204 to 224; these read VLYIIAQCLGAICGVGLVKGF, GTGLGAEIIGTFVLVYTVFSA, and IPVLAPLPIGFAVFMVHLATI. An NPA 2 motif is present at residues 232–234; that stretch reads NPA. The chain crosses the membrane as a helical span at residues 254–274; it reads IFWVGPLIGAAIAAAYHQYVL.

Belongs to the MIP/aquaporin (TC 1.A.8) family. PIP (TC 1.A.8.11) subfamily. In terms of tissue distribution, expressed in roots, leaves and anthers.

It is found in the cell membrane. In terms of biological role, aquaporins facilitate the transport of water and small neutral solutes across cell membranes. The sequence is that of Probable aquaporin PIP2-2 (PIP2-2) from Oryza sativa subsp. japonica (Rice).